The primary structure comprises 232 residues: Putative homeobox protein NANOG2 (232 aa).

The segment at Met-1 to Gln-39 is disordered. Polar residues predominate over residues Ser-11–Lys-25. The span at Ser-26–Pro-35 shows a compositional bias: basic and acidic residues. Repeat copies occupy residues Trp-123 to Thr-127, Trp-128 to Thr-132, Trp-133 to Thr-137, Trp-143 to Ser-147, Trp-148 to Thr-152, Trp-153 to Ser-157, Trp-158 to Ala-162, and Trp-163 to Phe-167. The segment at Trp-123–Phe-167 is 8 X repeats starting with a Trp in each unit. Positions Trp-123–Phe-167 are sufficient for transactivation activity. Residues Tyr-168–Val-232 are sufficient for strong transactivation activity.

The protein belongs to the Nanog homeobox family.

The protein localises to the nucleus. Its function is as follows. Probable transcriptional regulator. The protein is Putative homeobox protein NANOG2 (NANOGP1) of Pan paniscus (Pygmy chimpanzee).